Consider the following 189-residue polypeptide: Elongation factor P (189 aa).

This sequence belongs to the elongation factor P family.

It is found in the cytoplasm. It participates in protein biosynthesis; polypeptide chain elongation. Functionally, involved in peptide bond synthesis. Stimulates efficient translation and peptide-bond synthesis on native or reconstituted 70S ribosomes in vitro. Probably functions indirectly by altering the affinity of the ribosome for aminoacyl-tRNA, thus increasing their reactivity as acceptors for peptidyl transferase. The chain is Elongation factor P from Xanthobacter autotrophicus (strain ATCC BAA-1158 / Py2).